A 184-amino-acid polypeptide reads, in one-letter code: GTP cyclohydrolase 1 (184 aa).

Positions 75, 78, and 146 each coordinate Zn(2+).

This sequence belongs to the GTP cyclohydrolase I family. In terms of assembly, toroid-shaped homodecamer, composed of two pentamers of five dimers.

It catalyses the reaction GTP + H2O = 7,8-dihydroneopterin 3'-triphosphate + formate + H(+). Its pathway is cofactor biosynthesis; 7,8-dihydroneopterin triphosphate biosynthesis; 7,8-dihydroneopterin triphosphate from GTP: step 1/1. This Chromohalobacter salexigens (strain ATCC BAA-138 / DSM 3043 / CIP 106854 / NCIMB 13768 / 1H11) protein is GTP cyclohydrolase 1.